Consider the following 397-residue polypeptide: uncharacterized protein (397 aa).

The next 4 membrane-spanning stretches (helical) occupy residues 142 to 162 (WETI…VGIA), 191 to 211 (SQLL…SVVL), 242 to 258 (ALTG…TYFL), and 260 to 280 (APWL…SAGF).

This sequence belongs to the cation diffusion facilitator (CDF) transporter (TC 2.A.4) family. SLC30A subfamily.

The protein resides in the membrane. This is an uncharacterized protein from Schizosaccharomyces pombe (strain 972 / ATCC 24843) (Fission yeast).